A 415-amino-acid polypeptide reads, in one-letter code: DNA polymerase IV (415 aa).

A UmuC domain is found at 15-196 (ILHVDMNCFF…LSVEAMHGIG (182 aa)). Mg(2+)-binding residues include Asp-19 and Asp-115. Glu-116 is an active-site residue. The segment covering 235 to 246 (KRAKGTDDREVD) has biased composition (basic and acidic residues). Residues 235-260 (KRAKGTDDREVDPSQMGQHKSVGNSM) are disordered. Polar residues predominate over residues 249–260 (QMGQHKSVGNSM).

This sequence belongs to the DNA polymerase type-Y family. In terms of assembly, monomer. Requires Mg(2+) as cofactor.

The protein localises to the cytoplasm. The catalysed reaction is DNA(n) + a 2'-deoxyribonucleoside 5'-triphosphate = DNA(n+1) + diphosphate. In terms of biological role, poorly processive, error-prone DNA polymerase involved in untargeted mutagenesis. Copies undamaged DNA at stalled replication forks, which arise in vivo from mismatched or misaligned primer ends. These misaligned primers can be extended by PolIV. Exhibits no 3'-5' exonuclease (proofreading) activity. May be involved in translesional synthesis, in conjunction with the beta clamp from PolIII. The polypeptide is DNA polymerase IV (Bacillus cereus (strain ATCC 14579 / DSM 31 / CCUG 7414 / JCM 2152 / NBRC 15305 / NCIMB 9373 / NCTC 2599 / NRRL B-3711)).